A 157-amino-acid chain; its full sequence is 2-C-methyl-D-erythritol 2,4-cyclodiphosphate synthase (157 aa).

D8 and H10 together coordinate a divalent metal cation. 4-CDP-2-C-methyl-D-erythritol 2-phosphate-binding positions include 8–10 (DVH) and 34–35 (HS). H42 lines the a divalent metal cation pocket. 4-CDP-2-C-methyl-D-erythritol 2-phosphate is bound by residues 56–58 (DIG), 61–65 (FPDTD), 100–106 (AQAPKMA), 132–135 (TTTE), F139, and R142.

This sequence belongs to the IspF family. In terms of assembly, homotrimer. A divalent metal cation serves as cofactor.

The enzyme catalyses 4-CDP-2-C-methyl-D-erythritol 2-phosphate = 2-C-methyl-D-erythritol 2,4-cyclic diphosphate + CMP. It participates in isoprenoid biosynthesis; isopentenyl diphosphate biosynthesis via DXP pathway; isopentenyl diphosphate from 1-deoxy-D-xylulose 5-phosphate: step 4/6. Involved in the biosynthesis of isopentenyl diphosphate (IPP) and dimethylallyl diphosphate (DMAPP), two major building blocks of isoprenoid compounds. Catalyzes the conversion of 4-diphosphocytidyl-2-C-methyl-D-erythritol 2-phosphate (CDP-ME2P) to 2-C-methyl-D-erythritol 2,4-cyclodiphosphate (ME-CPP) with a corresponding release of cytidine 5-monophosphate (CMP). The sequence is that of 2-C-methyl-D-erythritol 2,4-cyclodiphosphate synthase from Pseudomonas fluorescens (strain ATCC BAA-477 / NRRL B-23932 / Pf-5).